The sequence spans 783 residues: Protein involved in starch initiation 1 (783 aa).

The transit peptide at Met1–Val27 directs the protein to the chloroplast. Coiled-coil stretches lie at residues Leu128–Glu309, Leu345–Ala432, and Leu457–Leu512.

As to quaternary structure, interacts with PTST2; the interaction is essential for the initiation of starch granules biosynthesis in leaf chloroplasts. Interacts with SS4; the interaction is essential for the initiation of starch granules biosynthesis in leaf chloroplasts.

The protein resides in the plastid. Its subcellular location is the chloroplast. Required for the initiation of starch granules biosynthesis in leaf chloroplasts. Involved in determining starch granule number and size in chloroplasts. In Arabidopsis thaliana (Mouse-ear cress), this protein is Protein involved in starch initiation 1.